A 122-amino-acid polypeptide reads, in one-letter code: Lectin A (122 aa).

Tyr38 provides a ligand contact to Ca(2+). 3 residues coordinate an alpha-D-galactoside: Glu44, Gln57, and Asp96. The Ca(2+) site is built by Asp96, Thr100, Asp103, and Asn104. Asp103 contributes to the an alpha-D-galactoside binding site.

This sequence belongs to the LecA/PllA lectin family. In terms of assembly, homotetramer.

Lectin that specifically binds alpha-galactoside-terminating glycoconjugates. Shows high apparent binding to the alpha-Gal epitope (Gal-alpha-1,3-Gal-beta-1,4-GlcNAc terminating glycans) as well as to Gal-alpha-1,4-GlcNAc and Gal-alpha-1,3-GalNAc. Gal-alpha-1,3-GalNAc may be one natural ligand bound by PllA both in the nematode symbiont and in infected insects. In Photorhabdus laumondii subsp. laumondii (strain DSM 15139 / CIP 105565 / TT01) (Photorhabdus luminescens subsp. laumondii), this protein is Lectin A.